Reading from the N-terminus, the 770-residue chain is Rho guanine nucleotide exchange factor 38 (770 aa).

Residues 33–88 (KTDTVVDSSVSGDHSGSLRRSQSDRTEYNQKLQEKMTPQAECSSAETPTPEDEQQV) are disordered. Threonine 34 bears the Phosphothreonine mark. Over residues 37-47 (VVDSSVSGDHS) the composition is skewed to low complexity. Residues 53–66 (SQSDRTEYNQKLQE) are compositionally biased toward basic and acidic residues. Residues 94–285 (KRAKIIRELI…KDINVNINEL (192 aa)) form the DH domain. Positions 327 to 542 (LKILTRGESQ…VHSLTFVKEN (216 aa)) constitute a BAR domain. SH3 domains lie at 581–644 (GAEE…PHNP) and 706–769 (VDEQ…KMTY).

Functionally, may act as a guanine-nucleotide releasing factor. The polypeptide is Rho guanine nucleotide exchange factor 38 (Arhgef38) (Mus musculus (Mouse)).